A 561-amino-acid chain; its full sequence is Embryonal Fyn-associated substrate (561 aa).

The SH3 domain occupies 5–68 (TSTQLARALY…PANRVKLLPA (64 aa)). Disordered regions lie at residues 68–123 (AGPA…CPPS), 171–215 (HPLT…PGPP), 240–372 (LADG…HNEY), and 390–422 (DKAQ…ALSP). A compositionally biased stretch (pro residues) spans 103-123 (VPPPARPCPTSGPPAGPCPPS). Tyr253 carries the post-translational modification Phosphotyrosine; by SRC. 2 short sequence motifs (SH3-binding) span residues 305 to 311 (RPLPALP) and 335 to 341 (RPLPPPP). Over residues 308 to 325 (PALPVPEAPSPSPVPSPA) the composition is skewed to pro residues. Basic and acidic residues predominate over residues 352–372 (VEGDPEGREMEDDPAGHHNEY). Residues 438–488 (FYAGQCQSHYSALQAAVAALMSSTQANQPPRLFVPHSKRVVVAAHRLVFVG) are divergent helix-loop-helix motif.

It belongs to the CAS family. Phosphorylated on multiple tyrosine residues. Phosphorylated on tyrosines by FYN and SRC. In terms of tissue distribution, the protein has been detected in lung and placenta.

Functionally, docking protein which plays a central coordinating role for tyrosine-kinase-based signaling related to cell adhesion. May serve as an activator of SRC and a downstream effector. Interacts with the SH3 domain of FYN and with CRK, SRC, and YES. The sequence is that of Embryonal Fyn-associated substrate (EFS) from Homo sapiens (Human).